We begin with the raw amino-acid sequence, 393 residues long: uncharacterized protein (393 aa).

The 265-residue stretch at 2–266 (AMIGLVGKPN…AEKAGIIKRK (265 aa)) folds into the OBG-type G domain. Residues 8-15 (GKPNVGKS) and 78-82 (DVAGL) contribute to the GTP site. A TGS domain is found at 314–390 (DMIVVYPVED…KHNDIIKIVS (77 aa)).

Belongs to the TRAFAC class OBG-HflX-like GTPase superfamily. OBG GTPase family.

This is an uncharacterized protein from Methanocaldococcus jannaschii (strain ATCC 43067 / DSM 2661 / JAL-1 / JCM 10045 / NBRC 100440) (Methanococcus jannaschii).